We begin with the raw amino-acid sequence, 196 residues long: Protein LURP-one-related 8 (196 aa).

The protein belongs to the LOR family.

Functionally, might be related to the phospholipid scramblase and tubby-like superfamily of membrane tethered transcription factors. The protein is Protein LURP-one-related 8 of Arabidopsis thaliana (Mouse-ear cress).